Reading from the N-terminus, the 276-residue chain is 2-hydroxy-6-oxo-2,4-heptadienoate hydrolase (276 aa).

Residues 28-259 enclose the AB hydrolase-1 domain; it reads NPVVLVHGSG…GRCGHWVQIE (232 aa). Catalysis depends on residues S105, D226, and H254.

The protein belongs to the DmpD/TodF/XylF esterase family.

The catalysed reaction is (2Z,4E)-2-hydroxy-6-oxohepta-2,4-dienoate + H2O = (2Z)-2-hydroxypenta-2,4-dienoate + acetate + H(+). The protein operates within xenobiotic degradation; toluene degradation. In terms of biological role, catalyzes the hydrolysis of 2-hydroxy-6-oxohepta-2,4-dienoate into 2-hydroxypenta-2,4-dienoate and acetate. The polypeptide is 2-hydroxy-6-oxo-2,4-heptadienoate hydrolase (todF) (Pseudomonas putida (strain ATCC 700007 / DSM 6899 / JCM 31910 / BCRC 17059 / LMG 24140 / F1)).